Here is a 200-residue protein sequence, read N- to C-terminus: Recombination protein RecR (200 aa).

A C4-type zinc finger spans residues 57–72 (CSHCRTFTENERCEIC). Residues 81–176 (GLLCVVESPA…KVSRIAHGVP (96 aa)) enclose the Toprim domain.

The protein belongs to the RecR family.

Functionally, may play a role in DNA repair. It seems to be involved in an RecBC-independent recombinational process of DNA repair. It may act with RecF and RecO. The sequence is that of Recombination protein RecR from Aeromonas hydrophila subsp. hydrophila (strain ATCC 7966 / DSM 30187 / BCRC 13018 / CCUG 14551 / JCM 1027 / KCTC 2358 / NCIMB 9240 / NCTC 8049).